The primary structure comprises 223 residues: Translation initiation factor 6 (223 aa).

This sequence belongs to the eIF-6 family.

Its function is as follows. Binds to the 50S ribosomal subunit and prevents its association with the 30S ribosomal subunit to form the 70S initiation complex. The chain is Translation initiation factor 6 from Sulfurisphaera tokodaii (strain DSM 16993 / JCM 10545 / NBRC 100140 / 7) (Sulfolobus tokodaii).